Here is a 303-residue protein sequence, read N- to C-terminus: Quinolinate synthase (303 aa).

His-24 and Ser-41 together coordinate iminosuccinate. A [4Fe-4S] cluster-binding site is contributed by Cys-86. Residues 112–114 (YIN) and Ser-129 each bind iminosuccinate. Cys-172 is a binding site for [4Fe-4S] cluster. Iminosuccinate contacts are provided by residues 198 to 200 (HPE) and Thr-215. A [4Fe-4S] cluster-binding site is contributed by Cys-260.

It belongs to the quinolinate synthase family. Type 2 subfamily. It depends on [4Fe-4S] cluster as a cofactor.

The protein resides in the cytoplasm. The catalysed reaction is iminosuccinate + dihydroxyacetone phosphate = quinolinate + phosphate + 2 H2O + H(+). It functions in the pathway cofactor biosynthesis; NAD(+) biosynthesis; quinolinate from iminoaspartate: step 1/1. Catalyzes the condensation of iminoaspartate with dihydroxyacetone phosphate to form quinolinate. The sequence is that of Quinolinate synthase from Caldicellulosiruptor saccharolyticus (strain ATCC 43494 / DSM 8903 / Tp8T 6331).